The following is a 401-amino-acid chain: Probable 2,3-bisphosphoglycerate-independent phosphoglycerate mutase (401 aa).

This sequence belongs to the BPG-independent phosphoglycerate mutase family. A-PGAM subfamily.

It carries out the reaction (2R)-2-phosphoglycerate = (2R)-3-phosphoglycerate. Its pathway is carbohydrate degradation; glycolysis; pyruvate from D-glyceraldehyde 3-phosphate: step 3/5. In terms of biological role, catalyzes the interconversion of 2-phosphoglycerate and 3-phosphoglycerate. In Thermotoga maritima (strain ATCC 43589 / DSM 3109 / JCM 10099 / NBRC 100826 / MSB8), this protein is Probable 2,3-bisphosphoglycerate-independent phosphoglycerate mutase.